A 606-amino-acid chain; its full sequence is Elongation factor 4 (606 aa).

The tr-type G domain maps to 11–193 (DKIRNFSIVA…AIVTRLPPPK (183 aa)). Residues 23 to 28 (DHGKST) and 140 to 143 (NKVD) contribute to the GTP site.

Belongs to the TRAFAC class translation factor GTPase superfamily. Classic translation factor GTPase family. LepA subfamily.

It is found in the cell inner membrane. The enzyme catalyses GTP + H2O = GDP + phosphate + H(+). Functionally, required for accurate and efficient protein synthesis under certain stress conditions. May act as a fidelity factor of the translation reaction, by catalyzing a one-codon backward translocation of tRNAs on improperly translocated ribosomes. Back-translocation proceeds from a post-translocation (POST) complex to a pre-translocation (PRE) complex, thus giving elongation factor G a second chance to translocate the tRNAs correctly. Binds to ribosomes in a GTP-dependent manner. The sequence is that of Elongation factor 4 from Caulobacter vibrioides (strain ATCC 19089 / CIP 103742 / CB 15) (Caulobacter crescentus).